The chain runs to 301 residues: Probable alpha-L-glutamate ligase (301 aa).

The ATP-grasp domain occupies 104–287; sequence LQLLSRKGVG…IAGMIIEYIE (184 aa). Residues lysine 141, 178–179, aspartate 187, and 211–213 contribute to the ATP site; these read EY and RSN. 3 residues coordinate Mg(2+): aspartate 248, glutamate 260, and asparagine 262. 3 residues coordinate Mn(2+): aspartate 248, glutamate 260, and asparagine 262.

The protein belongs to the RimK family. Requires Mg(2+) as cofactor. It depends on Mn(2+) as a cofactor.

This is Probable alpha-L-glutamate ligase from Photobacterium profundum (strain SS9).